Consider the following 340-residue polypeptide: L-threonine 3-dehydrogenase (340 aa).

Cysteine 38 contacts Zn(2+). Catalysis depends on charge relay system residues threonine 40 and histidine 43. 6 residues coordinate Zn(2+): histidine 63, glutamate 64, cysteine 93, cysteine 96, cysteine 99, and cysteine 107. Residues isoleucine 175, aspartate 195, arginine 200, leucine 261–isoleucine 263, and isoleucine 285–tyrosine 286 contribute to the NAD(+) site.

This sequence belongs to the zinc-containing alcohol dehydrogenase family. As to quaternary structure, homotetramer. Requires Zn(2+) as cofactor.

Its subcellular location is the cytoplasm. The catalysed reaction is L-threonine + NAD(+) = (2S)-2-amino-3-oxobutanoate + NADH + H(+). It participates in amino-acid degradation; L-threonine degradation via oxydo-reductase pathway; glycine from L-threonine: step 1/2. Its function is as follows. Catalyzes the NAD(+)-dependent oxidation of L-threonine to 2-amino-3-ketobutyrate. This is L-threonine 3-dehydrogenase from Xanthomonas oryzae pv. oryzae (strain MAFF 311018).